The sequence spans 308 residues: D-alanine--D-alanine ligase (308 aa).

The region spanning 103–302 (KTVMATAGVP…FDELVQWMVE (200 aa)) is the ATP-grasp domain. 130–184 (MAPPYVIKPVADGSSVGVFIVTEDQAHPPQELFRDDWPHGEELLVEKYIAGRELT) is an ATP binding site. Mg(2+) is bound by residues aspartate 252, glutamate 269, and asparagine 271.

Belongs to the D-alanine--D-alanine ligase family. It depends on Mg(2+) as a cofactor. Mn(2+) serves as cofactor.

It is found in the cytoplasm. The catalysed reaction is 2 D-alanine + ATP = D-alanyl-D-alanine + ADP + phosphate + H(+). Its pathway is cell wall biogenesis; peptidoglycan biosynthesis. Cell wall formation. The sequence is that of D-alanine--D-alanine ligase from Afipia carboxidovorans (strain ATCC 49405 / DSM 1227 / KCTC 32145 / OM5) (Oligotropha carboxidovorans).